The chain runs to 300 residues: Ribosomal protein L11 methyltransferase (300 aa).

Residues T152, G173, D195, and N234 each coordinate S-adenosyl-L-methionine.

This sequence belongs to the methyltransferase superfamily. PrmA family.

It is found in the cytoplasm. The enzyme catalyses L-lysyl-[protein] + 3 S-adenosyl-L-methionine = N(6),N(6),N(6)-trimethyl-L-lysyl-[protein] + 3 S-adenosyl-L-homocysteine + 3 H(+). In terms of biological role, methylates ribosomal protein L11. The sequence is that of Ribosomal protein L11 methyltransferase from Paraburkholderia phytofirmans (strain DSM 17436 / LMG 22146 / PsJN) (Burkholderia phytofirmans).